An 860-amino-acid polypeptide reads, in one-letter code: Alanine--tRNA ligase (860 aa).

Residues His553, His557, Cys655, and His659 each contribute to the Zn(2+) site.

The protein belongs to the class-II aminoacyl-tRNA synthetase family. Zn(2+) serves as cofactor.

The protein resides in the cytoplasm. The catalysed reaction is tRNA(Ala) + L-alanine + ATP = L-alanyl-tRNA(Ala) + AMP + diphosphate. In terms of biological role, catalyzes the attachment of alanine to tRNA(Ala) in a two-step reaction: alanine is first activated by ATP to form Ala-AMP and then transferred to the acceptor end of tRNA(Ala). Also edits incorrectly charged Ser-tRNA(Ala) and Gly-tRNA(Ala) via its editing domain. This is Alanine--tRNA ligase from Legionella pneumophila (strain Paris).